We begin with the raw amino-acid sequence, 393 residues long: NAD(P)H-quinone oxidoreductase subunit H, chloroplastic (393 aa).

Belongs to the complex I 49 kDa subunit family. As to quaternary structure, NDH is composed of at least 16 different subunits, 5 of which are encoded in the nucleus. Interacts with the chaperonin CNP60B4 subunit.

The protein localises to the plastid. Its subcellular location is the chloroplast thylakoid membrane. It carries out the reaction a plastoquinone + NADH + (n+1) H(+)(in) = a plastoquinol + NAD(+) + n H(+)(out). The enzyme catalyses a plastoquinone + NADPH + (n+1) H(+)(in) = a plastoquinol + NADP(+) + n H(+)(out). Its function is as follows. NDH shuttles electrons from NAD(P)H:plastoquinone, via FMN and iron-sulfur (Fe-S) centers, to quinones in the photosynthetic chain and possibly in a chloroplast respiratory chain. The immediate electron acceptor for the enzyme in this species is believed to be plastoquinone. Couples the redox reaction to proton translocation, and thus conserves the redox energy in a proton gradient. The protein is NAD(P)H-quinone oxidoreductase subunit H, chloroplastic of Arabidopsis thaliana (Mouse-ear cress).